A 135-amino-acid chain; its full sequence is Cilia- and flagella-associated protein 144 (135 aa).

The disordered stretch occupies residues 76 to 100; that stretch reads QGPKKKYSETQTEAQEIGWDPNPLI.

The protein belongs to the CFAP144 family. In terms of assembly, microtubule inner protein component of sperm flagellar doublet microtubules. In terms of tissue distribution, predominantly expressed in tissues containing motile cilia.

It is found in the cytoplasm. Its subcellular location is the cytoskeleton. The protein localises to the cilium axoneme. The protein resides in the flagellum axoneme. The protein is Cilia- and flagella-associated protein 144 of Mus musculus (Mouse).